The sequence spans 370 residues: tRNA pseudouridine(27/28) synthase (370 aa).

Asp-56 functions as the Nucleophile in the catalytic mechanism. Residue Tyr-111 participates in substrate binding.

Belongs to the tRNA pseudouridine synthase TruA family.

The protein resides in the mitochondrion. It carries out the reaction uridine(27/28) in mitochondrial tRNA = pseudouridine(27/28) in mitochondrial tRNA. In terms of biological role, mitochondrial-specific pseudouridine synthase catalyzing the formation of pseudouridine at positions 27 and 28 in the anticodon stem and loop of mitochondrial transfer RNAs. The polypeptide is tRNA pseudouridine(27/28) synthase (PUS2) (Saccharomyces cerevisiae (strain ATCC 204508 / S288c) (Baker's yeast)).